Consider the following 554-residue polypeptide: CTP synthase (554 aa).

Residues 1–265 (MTPLIFVTGG…DELVIVQFKL (265 aa)) form an amidoligase domain region. Serine 13 is a binding site for CTP. Residue serine 13 coordinates UTP. ATP-binding positions include 14-19 (SLGKGI) and aspartate 71. Mg(2+) contacts are provided by aspartate 71 and glutamate 139. Residues 146–148 (DIE), 186–191 (KTKPTQ), and lysine 222 each bind CTP. Residues 186–191 (KTKPTQ) and lysine 222 contribute to the UTP site. In terms of domain architecture, Glutamine amidotransferase type-1 spans 292-545 (TIAVVGKYVD…VRAAREKKAG (254 aa)). L-glutamine is bound at residue glycine 353. Catalysis depends on cysteine 380, which acts as the Nucleophile; for glutamine hydrolysis. Residues 381–384 (YGMQ), glutamate 404, and arginine 471 contribute to the L-glutamine site. Active-site residues include histidine 518 and glutamate 520.

This sequence belongs to the CTP synthase family. Homotetramer.

The enzyme catalyses UTP + L-glutamine + ATP + H2O = CTP + L-glutamate + ADP + phosphate + 2 H(+). It catalyses the reaction L-glutamine + H2O = L-glutamate + NH4(+). The catalysed reaction is UTP + NH4(+) + ATP = CTP + ADP + phosphate + 2 H(+). The protein operates within pyrimidine metabolism; CTP biosynthesis via de novo pathway; CTP from UDP: step 2/2. Its activity is regulated as follows. Allosterically activated by GTP, when glutamine is the substrate; GTP has no effect on the reaction when ammonia is the substrate. The allosteric effector GTP functions by stabilizing the protein conformation that binds the tetrahedral intermediate(s) formed during glutamine hydrolysis. Inhibited by the product CTP, via allosteric rather than competitive inhibition. Functionally, catalyzes the ATP-dependent amination of UTP to CTP with either L-glutamine or ammonia as the source of nitrogen. Regulates intracellular CTP levels through interactions with the four ribonucleotide triphosphates. This Xanthomonas oryzae pv. oryzae (strain MAFF 311018) protein is CTP synthase.